The sequence spans 400 residues: Probable peptidoglycan glycosyltransferase FtsW (400 aa).

Topologically, residues Met1–Gln29 are cytoplasmic. Residues Leu30 to Phe50 traverse the membrane as a helical segment. Residues Pro51 to Pro60 are Periplasmic-facing. The chain crosses the membrane as a helical span at residues Phe61–Val81. At Leu82–His95 the chain is on the cytoplasmic side. Residues Leu96–Gly116 traverse the membrane as a helical segment. Residues Ala117–Pro122 are Periplasmic-facing. A helical transmembrane segment spans residues Leu123–Ala143. The Cytoplasmic segment spans residues Gly144–Asp155. Residues Ser156–Met176 form a helical membrane-spanning segment. Residues Gln177–Pro178 are Periplasmic-facing. A helical membrane pass occupies residues Asp179–Ala199. Position 200 (Lys200) is a topological domain, cytoplasmic. A helical transmembrane segment spans residues Leu201 to Ala221. Topologically, residues Glu222–Gly290 are periplasmic. A helical membrane pass occupies residues Phe291–Ile311. The Cytoplasmic segment spans residues Gly312 to Arg321. The chain crosses the membrane as a helical span at residues Phe322–Val342. Topologically, residues Gly343 to Leu356 are periplasmic. Residues Pro357 to Ile377 form a helical membrane-spanning segment. Over Arg378–Lys400 the chain is Cytoplasmic.

It belongs to the SEDS family. FtsW subfamily.

It localises to the cell inner membrane. It catalyses the reaction [GlcNAc-(1-&gt;4)-Mur2Ac(oyl-L-Ala-gamma-D-Glu-L-Lys-D-Ala-D-Ala)](n)-di-trans,octa-cis-undecaprenyl diphosphate + beta-D-GlcNAc-(1-&gt;4)-Mur2Ac(oyl-L-Ala-gamma-D-Glu-L-Lys-D-Ala-D-Ala)-di-trans,octa-cis-undecaprenyl diphosphate = [GlcNAc-(1-&gt;4)-Mur2Ac(oyl-L-Ala-gamma-D-Glu-L-Lys-D-Ala-D-Ala)](n+1)-di-trans,octa-cis-undecaprenyl diphosphate + di-trans,octa-cis-undecaprenyl diphosphate + H(+). Its pathway is cell wall biogenesis; peptidoglycan biosynthesis. Functionally, peptidoglycan polymerase that is essential for cell division. In Aliivibrio salmonicida (strain LFI1238) (Vibrio salmonicida (strain LFI1238)), this protein is Probable peptidoglycan glycosyltransferase FtsW.